The primary structure comprises 319 residues: MEESAVDDVIERLLEVRNNRPGKQVNLAEGEIRQLCLTAKDVFMSQPNLLELEAPIKICGDIHGQYTDLLRLFEYGGFPPEANYLFLGDYVDRGKQSLETICLLLAFKVKYPKNFFLLRGNHECASINRIYGFYDVCKRRYNIRLWKTFTDCFNCLPACALVDEKIICMHGGLSPELKSLDAIRHIPRPTDVPDTGLLCDLLWSDPDKDVAGWGENDRGVSYTFGPDTVTGFLQKHDLDLICRAHQVVEDGYEFFAKRQLVTLFSAPNYCGEFDNAGALMSVDDTLMCSFQILKPSEKKGKLLYGSGALAGPGRGTPRR.

Mn(2+) contacts are provided by Asp-61, His-63, Asp-89, and Asn-121. Residue His-122 is the Proton donor of the active site. Mn(2+) contacts are provided by His-170 and His-245.

It belongs to the PPP phosphatase family. PP-1 subfamily. Mn(2+) is required as a cofactor.

It catalyses the reaction O-phospho-L-seryl-[protein] + H2O = L-seryl-[protein] + phosphate. It carries out the reaction O-phospho-L-threonyl-[protein] + H2O = L-threonyl-[protein] + phosphate. The chain is Serine/threonine-protein phosphatase PP1 isozyme 2 from Acetabularia peniculus (Green alga).